We begin with the raw amino-acid sequence, 208 residues long: Uracil phosphoribosyltransferase (208 aa).

5-phospho-alpha-D-ribose 1-diphosphate-binding positions include Arg78, Arg103, and 130–138; that span reads DPMLAIGGS. Uracil-binding positions include Ile193 and 198–200; that span reads GDA. Asp199 is a binding site for 5-phospho-alpha-D-ribose 1-diphosphate.

This sequence belongs to the UPRTase family. Mg(2+) serves as cofactor.

The catalysed reaction is UMP + diphosphate = 5-phospho-alpha-D-ribose 1-diphosphate + uracil. Its pathway is pyrimidine metabolism; UMP biosynthesis via salvage pathway; UMP from uracil: step 1/1. Allosterically activated by GTP. Catalyzes the conversion of uracil and 5-phospho-alpha-D-ribose 1-diphosphate (PRPP) to UMP and diphosphate. The polypeptide is Uracil phosphoribosyltransferase (Vibrio cholerae serotype O1 (strain ATCC 39315 / El Tor Inaba N16961)).